Reading from the N-terminus, the 825-residue chain is Breast cancer anti-estrogen resistance protein 3 (825 aa).

Position 2 is an N-acetylalanine (Ala2). Ser32, Ser78, and Ser83 each carry phosphoserine. Residues Asp40–Arg106 are disordered. A compositionally biased stretch (polar residues) spans Pro79–Pro94. The span at Trp95–Arg106 shows a compositional bias: basic and acidic residues. An SH2 domain is found at Trp154–Ile253. Phosphoserine is present on residues Ser182 and Ser290. Lys334 is subject to N6-methyllysine. Phosphoserine occurs at positions 358, 363, and 375. An Omega-N-methylarginine modification is found at Arg442. Residue Ser471 is modified to Phosphoserine. Residues Asp548–Pro818 form the Ras-GEF domain. The segment at Leu744–Arg748 is mediates the interaction with BCAR1/p130CAS.

Part of a complex comprised of PTPRA, BCAR1, BCAR3 (via SH2 domain) and SRC; the formation of the complex is dependent on integrin mediated-tyrosine phosphorylation of PTPRA. Within the complex, interacts (via SH2 domain) with PTPRA (when phosphorylated on 'Tyr-798'). Interacts (via Ras-GEF domain) with BCAR1. Interacts (via Ras-GEF domain) with NEDD9. Interacts with PTK2/FAK1. Interacts with PTPN1. Interacts (via SH2 domain) with EGFR (when tyrosine-phosphorylated). In terms of processing, phosphorylated on tyrosine residues. As to expression, ubiquitously expressed. Found in several cancer cell lines, but not in nonmalignant breast tissue.

Its subcellular location is the cytoplasm. The protein localises to the cell junction. The protein resides in the focal adhesion. Functionally, acts as an adapter protein downstream of several growth factor receptors to promote cell proliferation, migration, and redistribution of actin fibers. Specifically involved in INS/insulin signaling pathway by mediating MAPK1/ERK2-MAPK3/ERK1 activation and DNA synthesis. Promotes insulin-mediated membrane ruffling. In response to vasoconstrictor peptide EDN1, involved in the activation of RAP1 downstream of PTK2B via interaction with phosphorylated BCAR1. Inhibits cell migration and invasion via regulation of TGFB-mediated matrix digestion, actin filament rearrangement, and inhibition of invadopodia activity. May inhibit TGFB-SMAD signaling, via facilitating BCAR1 and SMAD2 and/or SMAD3 interaction. Regulates EGF-induced DNA synthesis. Required for the maintenance of ocular lens morphology and structural integrity, potentially via regulation of focal adhesion complex signaling. Acts upstream of PTPRA to regulate the localization of BCAR1 and PTPRA to focal adhesions, via regulation of SRC-mediated phosphorylation of PTPRA. Positively regulates integrin-induced tyrosine phosphorylation of BCAR1. Acts as a guanine nucleotide exchange factor (GEF) for small GTPases RALA, RAP1A and RRAS. However, in a contrasting study, lacks GEF activity towards RAP1. This is Breast cancer anti-estrogen resistance protein 3 (BCAR3) from Homo sapiens (Human).